We begin with the raw amino-acid sequence, 388 residues long: Oligogalacturonate lyase (388 aa).

The protein resides in the periplasm. The catalysed reaction is 4-(4-deoxy-alpha-D-galact-4-enuronosyl)-D-galacturonate = 2 5-dehydro-4-deoxy-D-glucuronate. Its pathway is glycan metabolism; pectin degradation; 2-dehydro-3-deoxy-D-gluconate from pectin: step 3/5. Functionally, involved in degradation of pectin, which causes soft-rod disease in plants. This chain is Oligogalacturonate lyase (ogl), found in Dickeya dadantii (strain 3937) (Erwinia chrysanthemi (strain 3937)).